The primary structure comprises 395 residues: Zinc finger protein 385D (395 aa).

Residues 80-110 form a Matrin-type 1 zinc finger; that stretch reads ISCNICQLRFNSDSQAAAHYKGTKHAKKLKA. Residues 169-193 show a composition bias toward polar residues; it reads MTTEITSKVEKSPTTATGNSSCPST. The tract at residues 169-194 is disordered; the sequence is MTTEITSKVEKSPTTATGNSSCPSTE. 2 consecutive Matrin-type zinc fingers follow at residues 204–234 and 267–297; these read LYCSLCKVAVNSASQLEAHNSGTKHKTMLEA and FHCEICDVHVNSETQLKQHISSRRHKDRAAG. A disordered region spans residues 282–309; the sequence is LKQHISSRRHKDRAAGKPPKPKYSPYNK.

The protein localises to the nucleus. This chain is Zinc finger protein 385D (ZNF385D), found in Homo sapiens (Human).